The chain runs to 1033 residues: Isoleucine--tRNA ligase 2 (1033 aa).

A 'HIGH' region motif is present at residues 47 to 57 (PTANGLPHVGH). A 'KMSKS' region motif is present at residues 590 to 594 (KMSKS). An ATP-binding site is contributed by Lys-593.

The protein belongs to the class-I aminoacyl-tRNA synthetase family. IleS type 2 subfamily. As to quaternary structure, monomer. Zn(2+) serves as cofactor.

The protein localises to the cytoplasm. The catalysed reaction is tRNA(Ile) + L-isoleucine + ATP = L-isoleucyl-tRNA(Ile) + AMP + diphosphate. Its function is as follows. Catalyzes the attachment of isoleucine to tRNA(Ile). As IleRS can inadvertently accommodate and process structurally similar amino acids such as valine, to avoid such errors it has two additional distinct tRNA(Ile)-dependent editing activities. One activity is designated as 'pretransfer' editing and involves the hydrolysis of activated Val-AMP. The other activity is designated 'posttransfer' editing and involves deacylation of mischarged Val-tRNA(Ile). This is Isoleucine--tRNA ligase 2 from Bacillus cereus (strain ZK / E33L).